Here is a 53-residue protein sequence, read N- to C-terminus: UPF0391 membrane protein BURPS1106A_A2993 (53 aa).

2 helical membrane-spanning segments follow: residues 5–25 (ALIF…GIAA) and 30–50 (IAKI…VLGV).

Belongs to the UPF0391 family.

The protein localises to the cell membrane. This is UPF0391 membrane protein BURPS1106A_A2993 from Burkholderia pseudomallei (strain 1106a).